The sequence spans 620 residues: Mitochondrial Rho GTPase 2 (620 aa).

At methionine 1 to arginine 594 the chain is on the cytoplasmic side. Residues lysine 2–histidine 168 enclose the Miro 1 domain. Residues glycine 16, lysine 17, threonine 18, and serine 19 each coordinate GTP. Mg(2+) is bound at residue threonine 18. Mg(2+)-binding residues include proline 35 and aspartate 57. Position 59 (serine 59) interacts with GTP. Lysine 96 is covalently cross-linked (Glycyl lysine isopeptide (Lys-Gly) (interchain with G-Cter in ubiquitin)). GTP is bound by residues asparagine 118, lysine 119, aspartate 121, alanine 149, and lysine 150. A Glycyl lysine isopeptide (Lys-Gly) (interchain with G-Cter in ubiquitin) cross-link involves residue lysine 119. A Glycyl lysine isopeptide (Lys-Gly) (interchain with G-Cter in ubiquitin) cross-link involves residue lysine 164. 2 consecutive EF-hand domains span residues alanine 184–histidine 219 and histidine 304–proline 339. Ca(2+) contacts are provided by aspartate 197, aspartate 199, aspartate 201, glutamate 208, aspartate 317, aspartate 319, aspartate 321, and glutamate 328. Residues proline 340–proline 364 form a disordered region. In terms of domain architecture, Miro 2 spans arginine 415–phenylalanine 578. Residues glycine 427, glycine 429, lysine 430, and serine 431 each coordinate GTP. Residues serine 431 and glutamate 473 each coordinate Mg(2+). Positions 527, 529, and 558 each coordinate GTP. Residues valine 595–valine 617 form a helical; Anchor for type IV membrane protein membrane-spanning segment. Over lysine 618 to arginine 620 the chain is Mitochondrial intermembrane.

It belongs to the mitochondrial Rho GTPase family. As to quaternary structure, homodimer. Interacts with the kinesin-binding proteins TRAK1/OIP106 and TRAK2/GRIF1, forming a link between mitochondria and the trafficking apparatus of the microtubules. Interacts with ARMCX3. Found in a complex with KIF5B, OGT, RHOT1 and TRAK1. In terms of processing, ubiquitinated by PRKN in a PINK1-dependent manner, leading to its degradation.

The protein localises to the mitochondrion outer membrane. It catalyses the reaction GTP + H2O = GDP + phosphate + H(+). The enzyme catalyses ATP + H2O = ADP + phosphate + H(+). It carries out the reaction UTP + H2O = UDP + phosphate + H(+). Its function is as follows. Atypical mitochondrial nucleoside-triphosphatase (NTPase) involved in mitochondrial trafficking. Probably involved in control of anterograde transport of mitochondria and their subcellular distribution. Can hydrolyze GTP, ATP and UTP. In Sus scrofa (Pig), this protein is Mitochondrial Rho GTPase 2 (RHOT2).